Consider the following 399-residue polypeptide: Nicotinate phosphoribosyltransferase (399 aa).

Position 217 is a phosphohistidine; by autocatalysis (histidine 217).

This sequence belongs to the NAPRTase family. In terms of processing, transiently phosphorylated on a His residue during the reaction cycle. Phosphorylation strongly increases the affinity for substrates and increases the rate of nicotinate D-ribonucleotide production. Dephosphorylation regenerates the low-affinity form of the enzyme, leading to product release.

The enzyme catalyses nicotinate + 5-phospho-alpha-D-ribose 1-diphosphate + ATP + H2O = nicotinate beta-D-ribonucleotide + ADP + phosphate + diphosphate. The protein operates within cofactor biosynthesis; NAD(+) biosynthesis; nicotinate D-ribonucleotide from nicotinate: step 1/1. Its function is as follows. Catalyzes the synthesis of beta-nicotinate D-ribonucleotide from nicotinate and 5-phospho-D-ribose 1-phosphate at the expense of ATP. The sequence is that of Nicotinate phosphoribosyltransferase from Burkholderia ambifaria (strain MC40-6).